The following is a 1634-amino-acid chain: Probable serine/threonine-protein kinase DDB_G0282895 (1634 aa).

An MORN 1 repeat occupies 40 to 63; sequence YKGNLNENKLKNGKGTFLFPNSIY. The tract at residues 84–131 is disordered; the sequence is QKIQKKSSQSKSQQQPPSQTKKSSSPINLSPRLQGQNPTITTNGSNNN. The span at 89–109 shows a compositional bias: low complexity; the sequence is KSSQSKSQQQPPSQTKKSSSP. The span at 110 to 119 shows a compositional bias: polar residues; that stretch reads INLSPRLQGQ. Residues 120 to 131 show a composition bias toward low complexity; the sequence is NPTITTNGSNNN. The MORN 2 repeat unit spans residues 169–191; sequence YNGKWINGKANGIGCFHFSKDDS. Composition is skewed to low complexity over residues 273–292 and 318–339; these read SNNN…LSPT and SGSG…PISS. 3 disordered regions span residues 273–367, 658–750, and 783–816; these read SNNN…QQQQ, TTAT…TFSV, and SSIL…NCGQ. A compositionally biased stretch (polar residues) spans 340–351; it reads GLQHSKTQPNVS. Low complexity-rich tracts occupy residues 352–367, 658–688, and 703–715; these read QSQN…QQQQ, TTAT…TTTT, and PPSQ…SPSS. The span at 716–732 shows a compositional bias: polar residues; sequence DQTNLPSIAISSSNGIS. A compositionally biased stretch (low complexity) spans 787-813; that stretch reads NNNNNNNNNNNNNNNNNNNNNNNNNNN. Residues 1255–1275 form a helical membrane-spanning segment; sequence IFIGFMELCVIDELCGFSFIY. Positions 1377–1634 constitute a Protein kinase domain; that stretch reads LQILQFLGEG…IIQKLCNHKC (258 aa). ATP is bound by residues 1383 to 1391 and Lys1404; that span reads LGEGALAEV. The active-site Proton acceptor is Asp1500.

This sequence belongs to the protein kinase superfamily. TKL Ser/Thr protein kinase family.

It is found in the membrane. The enzyme catalyses L-seryl-[protein] + ATP = O-phospho-L-seryl-[protein] + ADP + H(+). It carries out the reaction L-threonyl-[protein] + ATP = O-phospho-L-threonyl-[protein] + ADP + H(+). This chain is Probable serine/threonine-protein kinase DDB_G0282895, found in Dictyostelium discoideum (Social amoeba).